A 334-amino-acid chain; its full sequence is N-acetylmuramoyl-L-alanine amidase sle1 (334 aa).

A signal peptide spans 1 to 25 (MQKKVIAAIIGTSAISAVAATQANA). Residues 27-70 (TTHTVKPGESVWAISNKYGISIAKLKSLNNLTSNLIFPNQVLKV) form the LysM 1 domain. Residues 71 to 86 (SGSSNSTSNSSRPSTN) show a composition bias toward low complexity. Positions 71-90 (SGSSNSTSNSSRPSTNSGGG) are disordered. LysM domains lie at 91 to 134 (SYYT…KLKV) and 158 to 201 (SYYT…KLKV). In terms of domain architecture, Peptidase C51 spans 210–334 (GSATTTNRGY…YQVNNYRYIH (125 aa)).

The protein resides in the secreted. It is found in the cell surface. The catalysed reaction is Hydrolyzes the link between N-acetylmuramoyl residues and L-amino acid residues in certain cell-wall glycopeptides.. Its function is as follows. Peptidoglycan hydrolase involved in the splitting of the septum during cell division. The sequence is that of N-acetylmuramoyl-L-alanine amidase sle1 (sle1) from Staphylococcus aureus (strain USA300).